A 276-amino-acid chain; its full sequence is Putative serine/threonine-protein kinase R436 (276 aa).

Positions 6 to 266 (YSLDKLIQNR…IKQKLNHFKT (261 aa)) constitute a Protein kinase domain. Residues 12–20 (IQNRKSKRI) and Lys35 each bind ATP. Catalysis depends on Asp132, which acts as the Proton acceptor.

This sequence belongs to the protein kinase superfamily. Ser/Thr protein kinase family.

The enzyme catalyses L-seryl-[protein] + ATP = O-phospho-L-seryl-[protein] + ADP + H(+). It carries out the reaction L-threonyl-[protein] + ATP = O-phospho-L-threonyl-[protein] + ADP + H(+). In Acanthamoeba polyphaga (Amoeba), this protein is Putative serine/threonine-protein kinase R436.